A 431-amino-acid polypeptide reads, in one-letter code: Sorting nexin-31 (431 aa).

The PX domain maps to 1–107 (MHICIPVTEE…DYFRKLQMDT (107 aa)).

Belongs to the sorting nexin family.

Its function is as follows. May be involved in protein trafficking. This chain is Sorting nexin-31 (snx31), found in Xenopus laevis (African clawed frog).